The sequence spans 138 residues: MATLQCRIVSAREELYSGEISMLIASGTEGEIGILPGHTPLITLLKPGAMRVQTSNGEEEVIYVSGGVLEVQPKMVTVLADTAMRAHNLDESKIVEARKKAEQMLVNQSDTVQINAALASLAESVAQLQTIRKYKNRA.

This sequence belongs to the ATPase epsilon chain family. As to quaternary structure, F-type ATPases have 2 components, CF(1) - the catalytic core - and CF(0) - the membrane proton channel. CF(1) has five subunits: alpha(3), beta(3), gamma(1), delta(1), epsilon(1). CF(0) has three main subunits: a, b and c.

It localises to the cell inner membrane. Functionally, produces ATP from ADP in the presence of a proton gradient across the membrane. The chain is ATP synthase epsilon chain from Psychrobacter arcticus (strain DSM 17307 / VKM B-2377 / 273-4).